The sequence spans 99 residues: Protein MOST-1 (99 aa).

As to quaternary structure, interacts with TSPO, IGHM and IGHD. Expressed in the heart, kidney, liver, pancreas, small intestine, ovary, testis, prostate and thymus. Expressed in all of the cancer cell lines tested.

The protein localises to the cytoplasm. It is found in the microsome membrane. The protein resides in the endoplasmic reticulum membrane. May be involved in cell survival, proliferation and progression of cancer cells. This chain is Protein MOST-1 (C8orf17), found in Homo sapiens (Human).